A 303-amino-acid polypeptide reads, in one-letter code: Phytochrome-associated serine/threonine-protein phosphatase 3 (303 aa).

Zn(2+)-binding residues include aspartate 50, histidine 52, aspartate 78, and asparagine 110. Residue histidine 111 is the Proton donor of the active site. Residues histidine 160 and histidine 234 each contribute to the Zn(2+) site.

It belongs to the PPP phosphatase family. PP-6 (PP-V) subfamily. In terms of assembly, interacts with PHYA and PHYB, mostly when they are phosphorylated and in Pfr forms. Interacts with TAP46. Interacts with NRP. Interacts with PIN1 and PIN2. Interacts with ABI5. Interacts with PIF3 and PIF4. Protein phosphatase 6 (PP6) holoenzyme is a heterotrimeric complex formed by the catalytic subunit FYPP, a SAPS domain-containing subunit (SAL) and a protein phosphatase 2A regulatory subunit A (PP2AA). The cofactor is Zn(2+). In terms of tissue distribution, mostly expressed in flowers. Also detected to a lower extent in stems and leaves. Expressed in roots.

The protein localises to the cytoplasm. The catalysed reaction is O-phospho-L-seryl-[protein] + H2O = L-seryl-[protein] + phosphate. It carries out the reaction O-phospho-L-threonyl-[protein] + H2O = L-threonyl-[protein] + phosphate. In terms of biological role, catalytic subunit of protein phosphatase 6 (PP6). Dephosphorylates phosphorylated phytochromes, with a preference toward Pfr forms. Plays a major role in the photoperiodic control of flowering time in long days by modulating phytochrome signals in flowering time control. Involved in the regulation of polar auxin transport in roots. Dephosphorylates directly the auxin efflux carriers PIN1 and PIN2, thus promoting their proper polar localization in root cell plasma membrane. Acts antagonistically with the protein kinase PID to regulate the reversible phosphorylation of PIN and polar targeting, subsequently impacting polar auxin transport and plant development. Involved in the regulation of abscisic acid (ABA) signaling during seed germination and postgermination seedling growth. Functions as a negative regulator of ABA signaling through direct dephosphorylation and destabilization of ABI5 protein. Acts antagonistically with the protein kinase SRK2E/SNRK2.6 to regulate ABI5 phosphorylation and ABA responses. Involved in the regulation of phosphorylation status in hypocotyl phototropism. Involved in the negative regulation of photomorphogenesis by controlling the stability and transcriptional activity of PIF3 and PIF4 proteins in the dark, via the regulation of their phosphorylation status. The polypeptide is Phytochrome-associated serine/threonine-protein phosphatase 3 (Arabidopsis thaliana (Mouse-ear cress)).